Here is a 236-residue protein sequence, read N- to C-terminus: Cutinase (236 aa).

Positions 1 to 20 are cleaved as a signal peptide; it reads MSLTLFSFLSLVSILCIVTA. Cys-66 and Cys-143 are joined by a disulfide. The active-site Nucleophile is the Ser-154. Cys-202 and Cys-209 are oxidised to a cystine. Residue Asp-206 is part of the active site. Catalysis depends on His-218, which acts as the Proton donor/acceptor.

The protein belongs to the cutinase family. The 2 disulfide bonds play a critical role in holding the catalytic residues in juxta-position; reduction of the disulfide bridges results in the complete inactivation of the enzyme.

The protein localises to the secreted. The catalysed reaction is cutin + H2O = cutin monomers.. In terms of biological role, catalyzes the hydrolysis of complex carboxylic polyesters found in the cell wall of plants. Degrades cutin, a macromolecule that forms the structure of the plant cuticle. Allows pathogenic fungi to penetrate through the cuticular barrier into the host plant during the initial stage of fungal infection. This Blumeria hordei (Barley powdery mildew) protein is Cutinase (CUT1).